The sequence spans 364 residues: Long-wave-sensitive opsin 1 (364 aa).

The Extracellular segment spans residues 1 to 52 (MAHAWGPQRLAGGQPQANFEESTQGSIFTYTNSNSTRDPFEGPNYHIAPRWV). An O-linked (GlcNAc) serine glycan is attached at Ser22. N-linked (GlcNAc...) asparagine glycosylation occurs at Asn34. A helical membrane pass occupies residues 53 to 77 (YHLTSAWMVFVVIASVFTNGLVLAA). The Cytoplasmic portion of the chain corresponds to 78–89 (TMRFKKLRHPLN). A helical membrane pass occupies residues 90–115 (WILVNLAIADLAETIIASTISVVNQM). Residues 116-129 (YGYFVLGHPLCVVE) are Extracellular-facing. A disulfide bridge connects residues Cys126 and Cys203. Residues 130–149 (GYTVSLCGITGLWSLAIISW) form a helical membrane-spanning segment. The Cytoplasmic segment spans residues 150 to 168 (ERWMVVCKPFGNVRFDAKL). The helical transmembrane segment at 169–192 (AITGIAFSWIWAAVWTAPPIFGWS) threads the bilayer. Residues 193–218 (RYWPHGLKTSCGPDVFSGSSYPGVQS) lie on the Extracellular side of the membrane. Residues 219–246 (YMIVLMITCCFIPLSVIILCYLQVWLAI) traverse the membrane as a helical segment. Residues 247–268 (RAVAKQQKESESTQKAEKEVTR) lie on the Cytoplasmic side of the membrane. A helical transmembrane segment spans residues 269 to 292 (MVMVMIFAYCLCWGPYTFFACFAA). The Extracellular segment spans residues 293–300 (AHPGYAFH). Residues 301 to 325 (PLVAALPAYFAKSATIYNPIIYVFM) traverse the membrane as a helical segment. Lys312 is modified (N6-(retinylidene)lysine). Residues 326 to 364 (NRQFRNCILQLFGKKVDDSSELSSVSKTEASSVSSVSPA) lie on the Cytoplasmic side of the membrane.

It belongs to the G-protein coupled receptor 1 family. Opsin subfamily. Phosphorylated on some or all of the serine and threonine residues present in the C-terminal region. In terms of tissue distribution, expressed in retina (at protein level). Expressed in cone and/or rod photoreceptor cells (at protein level).

The protein resides in the membrane. Its function is as follows. Visual pigments are the light-absorbing molecules that mediate vision. They consist of an apoprotein, opsin, covalently linked to cis-retinal. This Bos taurus (Bovine) protein is Long-wave-sensitive opsin 1 (OPN1LW).